Here is a 435-residue protein sequence, read N- to C-terminus: Trigger factor (435 aa).

One can recognise a PPIase FKBP-type domain in the interval Gly-163 to Pro-248.

It belongs to the FKBP-type PPIase family. Tig subfamily.

The protein localises to the cytoplasm. The enzyme catalyses [protein]-peptidylproline (omega=180) = [protein]-peptidylproline (omega=0). Functionally, involved in protein export. Acts as a chaperone by maintaining the newly synthesized protein in an open conformation. Functions as a peptidyl-prolyl cis-trans isomerase. The polypeptide is Trigger factor (Citrifermentans bemidjiense (strain ATCC BAA-1014 / DSM 16622 / JCM 12645 / Bem) (Geobacter bemidjiensis)).